The chain runs to 782 residues: Potassium transporter 6 (782 aa).

Over 1-18 the chain is Cytoplasmic; that stretch reads MEIESGSYQNAKKESWRT. The helical transmembrane segment at 19–39 threads the bilayer; that stretch reads VLTLAYQSLGVVYGDLSISPL. Over 40 to 61 the chain is Extracellular; the sequence is YVYKSTFAEDIHHSESNEEIFG. A helical membrane pass occupies residues 62-82; the sequence is VLSFIFWTITLVPLLKYVFIV. Topologically, residues 83–153 are cytoplasmic; sequence LRADDNGEGG…TLEKHGVLQK (71 aa). Residues 154–174 traverse the membrane as a helical segment; it reads ILLVLALIGTCMVIGDGVLTP. Residues 175 to 195 are Extracellular-facing; that stretch reads AISVFSAVSGVELSMSKEHHK. The chain crosses the membrane as a helical span at residues 196–216; it reads YIELPAACVILIGLFALQHYG. At 217–219 the chain is on the cytoplasmic side; the sequence is THR. A helical membrane pass occupies residues 220–240; the sequence is VGFLFAPVILLWLMCISAIGV. Over 241–270 the chain is Extracellular; the sequence is YNIFHWNPHVYQALSPYYMYKFLKKTQSRG. Residues 271 to 291 form a helical membrane-spanning segment; that stretch reads WMSLGGILLCITGSEAMFADL. Residues 292-296 are Cytoplasmic-facing; sequence GHFSQ. Residues 297 to 317 traverse the membrane as a helical segment; that stretch reads LSIKIAFTSLVYPSLILAYMG. The Extracellular portion of the chain corresponds to 318–347; sequence QAAYLSQHHIIESEYNIGFYVSVPERLRWP. The chain crosses the membrane as a helical span at residues 348–368; sequence VLVIAILAAVVGSQAIITGTF. The Cytoplasmic segment spans residues 369 to 395; it reads SIIKQCSALGCFPKVKIVHTSSKIHGQ. A helical transmembrane segment spans residues 396–416; it reads IYIPEINWILMVLCLAVTIGF. At 417-421 the chain is on the extracellular side; it reads RDTKR. 2 helical membrane-spanning segments follow: residues 422-442 and 443-463; these read LGNA…CLMS and LVIV…VVFF. The Extracellular portion of the chain corresponds to 464–474; sequence GTIESLYFSAS. Residues 475 to 495 traverse the membrane as a helical segment; the sequence is LIKFLEGAWVPIALAFCFLLA. At 496 to 782 the chain is on the cytoplasmic side; sequence MCTWHYGTLK…TLEVGMIYNV (287 aa). Positions 664–675 are enriched in basic and acidic residues; it reads YESDIDDPDKPG. The disordered stretch occupies residues 664 to 693; that stretch reads YESDIDDPDKPGTSEIRSPKPKKKSKSKVK. The segment covering 682-693 has biased composition (basic residues); the sequence is PKPKKKSKSKVK.

This sequence belongs to the HAK/KUP transporter (TC 2.A.72.3) family.

It is found in the cell membrane. Probable potassium transporter. The chain is Potassium transporter 6 (POT6) from Arabidopsis thaliana (Mouse-ear cress).